The sequence spans 272 residues: tRNA uridine(34) hydroxylase (272 aa).

A Rhodanese domain is found at 121–217 (SRSDVYTIDT…YFKSTGNINN (97 aa)). C177 acts as the Cysteine persulfide intermediate in catalysis.

Belongs to the TrhO family.

It catalyses the reaction uridine(34) in tRNA + AH2 + O2 = 5-hydroxyuridine(34) in tRNA + A + H2O. Catalyzes oxygen-dependent 5-hydroxyuridine (ho5U) modification at position 34 in tRNAs. The sequence is that of tRNA uridine(34) hydroxylase from Ehrlichia ruminantium (strain Welgevonden).